A 1378-amino-acid polypeptide reads, in one-letter code: DNA-directed RNA polymerase subunit beta (1378 aa).

Belongs to the RNA polymerase beta chain family. As to quaternary structure, the RNAP catalytic core consists of 2 alpha, 1 beta, 1 beta' and 1 omega subunit. When a sigma factor is associated with the core the holoenzyme is formed, which can initiate transcription.

The enzyme catalyses RNA(n) + a ribonucleoside 5'-triphosphate = RNA(n+1) + diphosphate. In terms of biological role, DNA-dependent RNA polymerase catalyzes the transcription of DNA into RNA using the four ribonucleoside triphosphates as substrates. The protein is DNA-directed RNA polymerase subunit beta of Ruegeria pomeroyi (strain ATCC 700808 / DSM 15171 / DSS-3) (Silicibacter pomeroyi).